A 448-amino-acid polypeptide reads, in one-letter code: tRNA modification GTPase MnmE (448 aa).

Residues Arg21, Glu80, and Lys119 each coordinate (6S)-5-formyl-5,6,7,8-tetrahydrofolate. One can recognise a TrmE-type G domain in the interval 215-370 (GVKLAIVGRP…LSEEILKKVG (156 aa)). Asn225 contacts K(+). GTP contacts are provided by residues 225 to 230 (NVGKSS), 244 to 250 (TDIAGTT), and 269 to 272 (DTAG). Ser229 provides a ligand contact to Mg(2+). K(+) is bound by residues Thr244, Ile246, and Thr249. Thr250 provides a ligand contact to Mg(2+). Lys448 contributes to the (6S)-5-formyl-5,6,7,8-tetrahydrofolate binding site.

The protein belongs to the TRAFAC class TrmE-Era-EngA-EngB-Septin-like GTPase superfamily. TrmE GTPase family. Homodimer. Heterotetramer of two MnmE and two MnmG subunits. The cofactor is K(+).

The protein localises to the cytoplasm. Exhibits a very high intrinsic GTPase hydrolysis rate. Involved in the addition of a carboxymethylaminomethyl (cmnm) group at the wobble position (U34) of certain tRNAs, forming tRNA-cmnm(5)s(2)U34. In Aquifex aeolicus (strain VF5), this protein is tRNA modification GTPase MnmE.